Reading from the N-terminus, the 155-residue chain is Ribosomal RNA large subunit methyltransferase H (155 aa).

Residues L72, G103, and 122 to 127 (LSPLTL) each bind S-adenosyl-L-methionine.

The protein belongs to the RNA methyltransferase RlmH family. Homodimer.

The protein resides in the cytoplasm. The catalysed reaction is pseudouridine(1915) in 23S rRNA + S-adenosyl-L-methionine = N(3)-methylpseudouridine(1915) in 23S rRNA + S-adenosyl-L-homocysteine + H(+). In terms of biological role, specifically methylates the pseudouridine at position 1915 (m3Psi1915) in 23S rRNA. This Haemophilus influenzae (strain PittEE) protein is Ribosomal RNA large subunit methyltransferase H.